Consider the following 1217-residue polypeptide: Myosin-5 (1217 aa).

Residues 1 to 11 are compositionally biased toward basic residues; sequence MAILKRGARNK. The segment at 1-24 is disordered; that stretch reads MAILKRGARNKTHQEPAKRGGNNI. The Myosin motor domain maps to 37–716; the sequence is VGVSDLTLLT…TLFALENMRD (680 aa). 130–137 is a binding site for ATP; sequence GESGAGKT. The residue at position 358 (S358) is a Phosphoserine. The actin-binding stretch occupies residues 405-487; it reads SIGILDIYGF…PGIFAAMNDS (83 aa). IQ domains are found at residues 720–740 and 741–766; these read HNMA…RIDA and AVKI…YGTS. A TH1 domain is found at 772–962; that stretch reads KERRSMSLLG…TIFVRRGNPA (191 aa). Disordered stretches follow at residues 956-1102, 1145-1174, and 1197-1217; these read VRRG…NPSE, GAKA…AQTV, and NKMR…DDDW. Residues 965–974 are compositionally biased toward basic residues; sequence KSKKKPRKKS. The segment covering 976–987 has biased composition (polar residues); it reads GMSAPTTQSSKT. Residues 994 to 1007 are compositionally biased toward low complexity; it reads SSNNQNTTVSQSLN. The segment covering 1025–1038 has biased composition (pro residues); the sequence is PAPPPPGSKKPAPQ. The span at 1050–1071 shows a compositional bias: low complexity; the sequence is PQAQMQTQTQIPASQSSATQSS. Pro residues predominate over residues 1072–1081; that stretch reads IPPPPPPPPS. Residues 1083–1145 enclose the SH3 domain; the sequence is TSEPQFEAAY…PTAYMVKHEG (63 aa). Positions 1162-1174 are enriched in polar residues; the sequence is IQNQSQPASAQTV. A compositionally biased stretch (acidic residues) spans 1203-1217; that stretch reads SDEEAAASSDNDDDW.

The protein belongs to the TRAFAC class myosin-kinesin ATPase superfamily. Myosin family. In terms of processing, phosphorylation of the TEDS site (Ser-358) is required for the polarization of the actin cytoskeleton. Phosphorylation probably activates the myosin-I ATPase activity.

It localises to the cytoplasm. It is found in the cytoskeleton. The protein resides in the actin patch. Type-I myosin implicated in the organization of the actin cytoskeleton. Required for proper actin cytoskeleton polarization. At the cell cortex, assembles in patch-like structures together with proteins from the actin-polymerizing machinery and promotes actin assembly. Functions as actin nucleation-promoting factor (NPF) for the Arp2/3 complex. In Candida glabrata (strain ATCC 2001 / BCRC 20586 / JCM 3761 / NBRC 0622 / NRRL Y-65 / CBS 138) (Yeast), this protein is Myosin-5 (MYO5).